We begin with the raw amino-acid sequence, 155 residues long: Probable tellurium resistance transcriptional regulator TerW (155 aa).

In terms of biological role, involved in tellurite resistance. TerW binds specifically to the potential promoter region of the terZABCDE operon and probably regulates expression of the genes. The sequence is that of Probable tellurium resistance transcriptional regulator TerW from Escherichia coli.